We begin with the raw amino-acid sequence, 498 residues long: Glycerol kinase (498 aa).

T14 contacts ADP. ATP is bound by residues T14, T15, and S16. T14 serves as a coordination point for sn-glycerol 3-phosphate. R18 lines the ADP pocket. Residues R84, E85, Y136, and D243 each coordinate sn-glycerol 3-phosphate. Glycerol-binding residues include R84, E85, Y136, D243, and Q244. Positions 265 and 308 each coordinate ADP. ATP-binding residues include T265, G308, Q312, and G409. G409 and N413 together coordinate ADP.

It belongs to the FGGY kinase family.

The catalysed reaction is glycerol + ATP = sn-glycerol 3-phosphate + ADP + H(+). The protein operates within polyol metabolism; glycerol degradation via glycerol kinase pathway; sn-glycerol 3-phosphate from glycerol: step 1/1. With respect to regulation, inhibited by fructose 1,6-bisphosphate (FBP). Its function is as follows. Key enzyme in the regulation of glycerol uptake and metabolism. Catalyzes the phosphorylation of glycerol to yield sn-glycerol 3-phosphate. This is Glycerol kinase from Shewanella frigidimarina (strain NCIMB 400).